A 43-amino-acid chain; its full sequence is Iota-conotoxin-like S11.2 (43 aa).

Cystine bridges form between C2–C16, C9–C19, C15–C24, and C18–C35. M41 carries the D-methionine modification. A propeptide (removed by a carboxypeptidase) is located at residue R43.

Belongs to the conotoxin I1 superfamily. In terms of tissue distribution, expressed by the venom duct.

It localises to the secreted. Its function is as follows. Iota-conotoxins bind to voltage-gated sodium channels (Nav) and act as agonists by shifting the voltage-dependence of activation to more hyperpolarized levels. Produces general excitatory symptoms. The polypeptide is Iota-conotoxin-like S11.2 (Conus striatus (Striated cone)).